Consider the following 329-residue polypeptide: MAWPDLDPPRLAERPLSLQEALFVLEAPPEALPALAEAAIRVKEYFFGRRLKLVRLLNVKSGFCPEDCAYCAQSARSQAAIARYPLLSLEEILERAEEAQRLSARRFCLVAALRGPTPKVLERLGEAAQAIKARFPLELCASLGLLEEGMAEALKAAGFDYYNHNLNTAPSLYPRIATTHTYQDRLWTLKRAREAGLKLCSGVILGMGEGPKEVYEMALALRELGVESLPVNFLLPIPGTPLGDGRTVAGLTPERALKALILFRLLNPKAELRASAGRERYLGPYEPLAFRMVNSIFLQGYLTQPGSPWERDRALWESLGLDVEEGACG.

The Radical SAM core domain occupies 46–275 (FFGRRLKLVR…LNPKAELRAS (230 aa)). The [4Fe-4S] cluster site is built by cysteine 64, cysteine 68, and cysteine 71. [2Fe-2S] cluster is bound by residues cysteine 108, cysteine 140, cysteine 200, and arginine 273.

It belongs to the radical SAM superfamily. Biotin synthase family. Homodimer. Requires [4Fe-4S] cluster as cofactor. The cofactor is [2Fe-2S] cluster.

It catalyses the reaction (4R,5S)-dethiobiotin + (sulfur carrier)-SH + 2 reduced [2Fe-2S]-[ferredoxin] + 2 S-adenosyl-L-methionine = (sulfur carrier)-H + biotin + 2 5'-deoxyadenosine + 2 L-methionine + 2 oxidized [2Fe-2S]-[ferredoxin]. The protein operates within cofactor biosynthesis; biotin biosynthesis; biotin from 7,8-diaminononanoate: step 2/2. Functionally, catalyzes the conversion of dethiobiotin (DTB) to biotin by the insertion of a sulfur atom into dethiobiotin via a radical-based mechanism. The chain is Biotin synthase from Thermus thermophilus (strain ATCC BAA-163 / DSM 7039 / HB27).